Reading from the N-terminus, the 905-residue chain is Cadherin-2B (905 aa).

The signal sequence occupies residues 1–28 (MCRKQPFLLPTLLGILAALMLQQGPVEA). A propeptide spanning residues 29-160 (FGGSRLCKTG…NSNGLQRQKR (132 aa)) is cleaved from the precursor. Cadherin domains are found at residues 161 to 268 (DWVI…RPEF), 269 to 383 (LHQI…PPEF), 384 to 498 (TAMT…NPYF), 499 to 604 (TPNP…DNAP), and 605 to 713 (YVYP…TTAP). The Extracellular portion of the chain corresponds to 161–723 (DWVIPPINVP…IIGTGLGTGA (563 aa)). Glu171 contributes to the Ca(2+) binding site. N-linked (GlcNAc...) asparagine glycosylation occurs at Asn191. The Ca(2+) site is built by Asp227, Glu229, Asp260, Met261, Asn262, Asp263, and Asn264. A glycan (N-linked (GlcNAc...) asparagine) is linked at Asn274. Ca(2+)-binding residues include Asp294, Asp296, and Asn302. Asn326 is a glycosylation site (N-linked (GlcNAc...) asparagine). Asp354 serves as a coordination point for Ca(2+). 5 N-linked (GlcNAc...) asparagine glycosylation sites follow: Asn403, Asn573, Asn623, Asn651, and Asn692. Residues 724 to 745 (IIAILLCIIILLTLVLMFVVWM) form a helical membrane-spanning segment. The Cytoplasmic segment spans residues 746-905 (KRRDKERQAK…LADMYGGSDD (160 aa)). 2 disordered regions span residues 774–800 (EEGG…PDTI) and 862–883 (SGST…EQDY). A compositionally biased stretch (acidic residues) spans 775–784 (EGGGEEDQDY). Positions 862-879 (SGSTAGSLSSLNSSSSGG) are enriched in low complexity.

In terms of assembly, homodimer (via extracellular region). Can also form heterodimers with other cadherins (via extracellular region). Dimerization occurs in trans, i.e. with a cadherin chain from another cell.

It is found in the cell membrane. It localises to the sarcolemma. The protein localises to the cell junction. The protein resides in the cell surface. Its subcellular location is the desmosome. It is found in the adherens junction. Its function is as follows. Calcium-dependent cell adhesion protein; preferentially mediates homotypic cell-cell adhesion. Cadherins may thus contribute to the sorting of heterogeneous cell types, and thereby play an important role during embryonic development. Required for proper neurite branching. Required for pre- and postsynaptic organization. The polypeptide is Cadherin-2B (cdh2-b) (Xenopus laevis (African clawed frog)).